We begin with the raw amino-acid sequence, 210 residues long: Urease accessory protein UreF (210 aa).

Belongs to the UreF family. In terms of assembly, ureD, UreF and UreG form a complex that acts as a GTP-hydrolysis-dependent molecular chaperone, activating the urease apoprotein by helping to assemble the nickel containing metallocenter of UreC. The UreE protein probably delivers the nickel.

The protein localises to the cytoplasm. Functionally, required for maturation of urease via the functional incorporation of the urease nickel metallocenter. This chain is Urease accessory protein UreF, found in Cereibacter sphaeroides (strain KD131 / KCTC 12085) (Rhodobacter sphaeroides).